A 166-amino-acid chain; its full sequence is Disulfide bond formation protein B (166 aa).

Residues 1–12 (MKITKLPSYRQT) are Cytoplasmic-facing. The chain crosses the membrane as a helical span at residues 13 to 29 (ALIIFAGCVGLILAALY). Residues 30–47 (MQEVLGLHPCPLCITQRI) are Periplasmic-facing. Residues Cys39 and Cys42 are joined by a disulfide bond. Residues 48 to 64 (FIIGVGLISLIAAIHNP) form a helical membrane-spanning segment. Topologically, residues 65–70 (AALGRK) are cytoplasmic. Residues 71 to 88 (VYGCLATLSGVIGAGVSA) form a helical membrane-spanning segment. The Periplasmic portion of the chain corresponds to 89-145 (RHVWLQNLPEDQVPACGPDLAYMFDAFPLLDALKLLFAGDGNCADVVASFLGLSIPG). Cys104 and Cys131 are disulfide-bonded. A helical membrane pass occupies residues 146–164 (WTFVAFVGLIAISVWQGLR). At 165 to 166 (KA) the chain is on the cytoplasmic side.

Belongs to the DsbB family.

The protein resides in the cell inner membrane. In terms of biological role, required for disulfide bond formation in some periplasmic proteins. Acts by oxidizing the DsbA protein. In Saccharophagus degradans (strain 2-40 / ATCC 43961 / DSM 17024), this protein is Disulfide bond formation protein B.